Consider the following 128-residue polypeptide: Cystatin-12 (128 aa).

Positions 1-21 are cleaved as a signal peptide; it reads MLWKSVLPVALIVLGIHDCSF. 2 disulfides stabilise this stretch: Cys-82-Cys-92 and Cys-105-Cys-125. The N-linked (GlcNAc...) asparagine glycan is linked to Asn-122.

The protein belongs to the cystatin family.

The protein resides in the secreted. May play a specialized role in spermatogenesis. The polypeptide is Cystatin-12 (Cst12) (Rattus norvegicus (Rat)).